The primary structure comprises 208 residues: MPKVPVYNIEGQQIGEIELNDSIFNVPINTHVLHQAVVAHLANRRQGTFAAKTRAEVRGGGRKPWRQKGTGRARQGSIRAPTWRKGGVVFAKKPRDFSIDLPKKVRRLALKCALSSKVKENNLIVLDKWDMNQYRTKEVIRVLKNLGLENEKALIVIPEKNEYLQKSTKNIPEVKTLQVGNLNVFDILKYDKFIILQDAVKKVEEVYA.

A disordered region spans residues 58–77; sequence RGGGRKPWRQKGTGRARQGS. The span at 60 to 71 shows a compositional bias: basic residues; sequence GGRKPWRQKGTG.

The protein belongs to the universal ribosomal protein uL4 family. In terms of assembly, part of the 50S ribosomal subunit.

In terms of biological role, one of the primary rRNA binding proteins, this protein initially binds near the 5'-end of the 23S rRNA. It is important during the early stages of 50S assembly. It makes multiple contacts with different domains of the 23S rRNA in the assembled 50S subunit and ribosome. Its function is as follows. Forms part of the polypeptide exit tunnel. In Caldicellulosiruptor saccharolyticus (strain ATCC 43494 / DSM 8903 / Tp8T 6331), this protein is Large ribosomal subunit protein uL4.